Reading from the N-terminus, the 339-residue chain is Phenylalanine--tRNA ligase alpha subunit (339 aa).

A Mg(2+)-binding site is contributed by Glu254.

Belongs to the class-II aminoacyl-tRNA synthetase family. Phe-tRNA synthetase alpha subunit type 1 subfamily. Tetramer of two alpha and two beta subunits. Requires Mg(2+) as cofactor.

It is found in the cytoplasm. The catalysed reaction is tRNA(Phe) + L-phenylalanine + ATP = L-phenylalanyl-tRNA(Phe) + AMP + diphosphate + H(+). In Alkaliphilus oremlandii (strain OhILAs) (Clostridium oremlandii (strain OhILAs)), this protein is Phenylalanine--tRNA ligase alpha subunit.